The sequence spans 239 residues: Uridylate kinase (239 aa).

ATP is bound at residue 10-13; sequence KFSG. The involved in allosteric activation by GTP stretch occupies residues 18-23; it reads GENGFG. Glycine 52 lines the UMP pocket. Glycine 53 and arginine 57 together coordinate ATP. Residues aspartate 73 and 134–141 each bind UMP; that span reads TGNPYFTT. The ATP site is built by threonine 161, tyrosine 167, and aspartate 170.

The protein belongs to the UMP kinase family. Homohexamer.

It localises to the cytoplasm. The enzyme catalyses UMP + ATP = UDP + ADP. It participates in pyrimidine metabolism; CTP biosynthesis via de novo pathway; UDP from UMP (UMPK route): step 1/1. Allosterically activated by GTP. Inhibited by UTP. Catalyzes the reversible phosphorylation of UMP to UDP. The sequence is that of Uridylate kinase from Campylobacter jejuni subsp. doylei (strain ATCC BAA-1458 / RM4099 / 269.97).